Consider the following 754-residue polypeptide: MPSCYEHSAQSPRPLSVLAEYFPKGYSVFYKANTETCPEANQYSKALVDFYTQELNQAEDTNLTLGQMGLGDGVSLLLLWQSLLQCRKNNPELSRLKVHLLIFEPHAISALELKQLWQALGLFDANSPVAPQAEQFIAGKMAQINGAQRFILEQGQLRIDVHFGDLHSNLTELMTPEHRVTHWHCLPHIAHTQTEFAETQASQLQFNQVQSNANQLNQAILWQMGRLSQDNASLYLDGENFKPSASDNNALTDCTLIKMATQAGFSRYSPNLFQASSDSCNAIPLGERRALRQQQENRQAHCPVPNSLGERRQAVNNSDSIAIIGGGIAGACLALSLAERGKAVTLYCKDDKLGDGATGNRQGAIYPLLTPENSHLSQFFQQAFLFSRRRLLALLHEVYPIGHQLCGVLQTGFDERSEARLEKIIQGQHWPEEIAYAVSPEQASALAGVSIDKPGFYYPNGGWICPFEFARACLEKAKSLANVEVKLNSTISCIKPLAANVDSKDASGCTSQASGTLWGLYHQGEIVGSHQQVVLASGASITAFEQTQALQMSGFRGQVSHVPSKGELAKLNTVICANGYLTPAFNSTHCVGASYVKDPEHLDFCSDEQAENGQKMQQSFPNLEWPQDIDVSDRNARVGVRMVTRDHFPMMGCAPDIEEIISRYQTLNASPQASQNNYAKQCQQYWQQTPAPVHHNLFVLGGLGSRGLSSAPLAAECLAAQLCGEIAPISATTLALLNPNRMWMRKLLKGKALC.

A tRNA (mnm(5)s(2)U34)-methyltransferase region spans residues 1 to 320 (MPSCYEHSAQ…RRQAVNNSDS (320 aa)). The interval 324–754 (IGGGIAGACL…RKLLKGKALC (431 aa)) is FAD-dependent cmnm(5)s(2)U34 oxidoreductase.

In the N-terminal section; belongs to the methyltransferase superfamily. tRNA (mnm(5)s(2)U34)-methyltransferase family. It in the C-terminal section; belongs to the DAO family. FAD serves as cofactor.

Its subcellular location is the cytoplasm. The enzyme catalyses 5-aminomethyl-2-thiouridine(34) in tRNA + S-adenosyl-L-methionine = 5-methylaminomethyl-2-thiouridine(34) in tRNA + S-adenosyl-L-homocysteine + H(+). Its function is as follows. Catalyzes the last two steps in the biosynthesis of 5-methylaminomethyl-2-thiouridine (mnm(5)s(2)U) at the wobble position (U34) in tRNA. Catalyzes the FAD-dependent demodification of cmnm(5)s(2)U34 to nm(5)s(2)U34, followed by the transfer of a methyl group from S-adenosyl-L-methionine to nm(5)s(2)U34, to form mnm(5)s(2)U34. The sequence is that of tRNA 5-methylaminomethyl-2-thiouridine biosynthesis bifunctional protein MnmC from Shewanella denitrificans (strain OS217 / ATCC BAA-1090 / DSM 15013).